The chain runs to 361 residues: Inhibin alpha chain (361 aa).

The N-terminal stretch at 1-21 is a signal peptide; that stretch reads MLPLLLPLQLLLLMVMKGGHG. The propeptide occupies 22–64; sequence CQGPELDRELVLAKVRALVLDALGPPNASKDGGKPVAQRLTRR. The segment at 45–82 is disordered; the sequence is GPPNASKDGGKPVAQRLTRRHAHTGGSTRRSMENEDED. N-linked (GlcNAc...) asparagine glycosylation is found at N48, N144, and N266. Residues 65 to 230 constitute a propeptide, inhibin alpha N-terminal region; that stretch reads HAHTGGSTRR…PPSVGERARR (166 aa). 3 cysteine pairs are disulfide-bonded: C260/C323, C289/C358, and C293/C360.

The protein belongs to the TGF-beta family. Dimeric, linked by one or more disulfide bonds. Activin B is a dimer of alpha and beta-B. Inhibin A is a dimer of alpha and beta-A. Inhibin B is a dimer of alpha and beta-B. Interacts with TGFBR3L; this interaction regulates female fertility. In terms of processing, proteolytic processing yields a number of bioactive forms, consisting either solely of the mature alpha chain, of the most N-terminal propeptide linked through a disulfide bond to the mature alpha chain, or of the entire proprotein.

It is found in the secreted. Functionally, inhibins and activins inhibit and activate, respectively, the secretion of follitropin by the pituitary gland. Inhibins/activins are involved in regulating a number of diverse functions such as hypothalamic and pituitary hormone secretion, gonadal hormone secretion, germ cell development and maturation, erythroid differentiation, insulin secretion, nerve cell survival, embryonic axial development or bone growth, depending on their subunit composition. Inhibins appear to oppose the functions of activins. Its function is as follows. Inhibin A is a dimer of alpha/INHA and beta-A/INHBA that functions as a feedback regulator in the hypothalamic-pituitary-gonadal (HPG) axis. Inhibits the secretion of FSH from the anterior pituitary gland by acting on pituitary gonadotrope cells. Antagonizes activin A by binding to the proteoglycan, betaglycan, and forming a stable complex with and, thereby, sequestering type II activin receptors while excluding type I receptor. In terms of biological role, inhibin B is a dimer of alpha and beta-B that plays a crucial role in the regulation of the reproductive system by inhibiting the secretion of follicle-stimulating hormone (FSH) from the anterior pituitary gland. Thereby, maintains reproductive homeostasis in both males and females. Acts as a more potent suppressor of FSH release than inhibin A. Functions as competitive receptor antagonist binding activin type II receptors with high affinity in the presence of the TGF-beta type III coreceptor/TGFBR3L. This chain is Inhibin alpha chain (INHA), found in Trichosurus vulpecula (Brush-tailed possum).